A 394-amino-acid polypeptide reads, in one-letter code: Multidrug resistance protein D (394 aa).

The Cytoplasmic portion of the chain corresponds to 1 to 8; it reads MKRQRNVN. The chain crosses the membrane as a helical span at residues 9–29; sequence LLLMLVLLVAVGQMAQTIYIP. Topologically, residues 30 to 46 are periplasmic; sequence AIADMARDLNVREGAVQ. The chain crosses the membrane as a helical span at residues 47–67; that stretch reads SVMGAYLLTYGVSQLFYGPIS. The Cytoplasmic segment spans residues 68–73; the sequence is DRVGRR. A helical membrane pass occupies residues 74-94; the sequence is PVILVGMSIFMLATLVAVTTS. A topological domain (periplasmic) is located at residue serine 95. Residues 96-116 traverse the membrane as a helical segment; the sequence is LTVLIAASAMQGMGTGVGGVM. Over 117–134 the chain is Cytoplasmic; sequence ARTLPRDLYERTQLRHAN. The chain crosses the membrane as a helical span at residues 135–155; sequence SLLNMGILVSPLLAPLIGGLL. The Periplasmic portion of the chain corresponds to 156–162; the sequence is DTMWNWR. Residues 163 to 183 form a helical membrane-spanning segment; that stretch reads ACYLFLLVLCAGVTFSMARWM. The Cytoplasmic portion of the chain corresponds to 184–212; it reads PETRPVDAPRTRLLTSYKTLFGNSGFNCY. The helical transmembrane segment at 213 to 233 threads the bilayer; it reads LLMLIGGLAGIAAFEACSGVL. The Periplasmic segment spans residues 234 to 242; sequence MGAVLGLSS. The chain crosses the membrane as a helical span at residues 243 to 263; sequence MTVSILFILPIPAAFFGAWFA. The Cytoplasmic segment spans residues 264 to 276; the sequence is GRPNKRFSTLMWQ. Residues 277 to 297 traverse the membrane as a helical segment; it reads SVICCLLAGLLMWIPDWFGVM. Residue asparagine 298 is a topological domain, periplasmic. The helical transmembrane segment at 299-319 threads the bilayer; it reads VWTLLVPAALFFFGAGMLFPL. At 320 to 329 the chain is on the cytoplasmic side; sequence ATSGAMEPFP. Residues 330–350 form a helical membrane-spanning segment; the sequence is FLAGTAGALVGGLQNIGSGVL. The Periplasmic segment spans residues 351-364; sequence ASLSAMLPQTGQGS. Residues 365 to 385 form a helical membrane-spanning segment; sequence LGLLMTLMGLLIVLCWLPLAT. The Cytoplasmic segment spans residues 386–394; sequence RMSHQGQPV.

The protein belongs to the major facilitator superfamily.

It is found in the cell inner membrane. Its function is as follows. Multidrug resistance pump that participates in a low energy shock adaptive response. The chain is Multidrug resistance protein D (emrD) from Escherichia coli (strain K12).